Consider the following 76-residue polypeptide: Kappa-actitoxin-Avd4c (76 aa).

The first 19 residues, 1–19, serve as a signal peptide directing secretion; sequence MNKALFLCLVVLCAAVVFA. The propeptide occupies 20–31; sequence AEDLQKAKHAPF. Cystine bridges form between Cys-37/Cys-72, Cys-39/Cys-65, and Cys-55/Cys-73.

It belongs to the sea anemone type 3 (BDS) potassium channel toxin family. Moderately expressed in the ectodermal tissue from the distal and proximal tentacles, body wall, and oral disk.

It localises to the secreted. Its subcellular location is the nematocyst. In terms of biological role, blocks Kv3 voltage-gated potassium channels. Reduces blood pressure. The sequence is that of Kappa-actitoxin-Avd4c from Anemonia viridis (Snakelocks anemone).